We begin with the raw amino-acid sequence, 440 residues long: ATP-dependent protease ATPase subunit HslU (440 aa).

ATP-binding positions include Val-18, Gly-60–Glu-65, Asp-254, Glu-319, and Arg-391.

The protein belongs to the ClpX chaperone family. HslU subfamily. As to quaternary structure, a double ring-shaped homohexamer of HslV is capped on each side by a ring-shaped HslU homohexamer. The assembly of the HslU/HslV complex is dependent on binding of ATP.

The protein localises to the cytoplasm. Its function is as follows. ATPase subunit of a proteasome-like degradation complex; this subunit has chaperone activity. The binding of ATP and its subsequent hydrolysis by HslU are essential for unfolding of protein substrates subsequently hydrolyzed by HslV. HslU recognizes the N-terminal part of its protein substrates and unfolds these before they are guided to HslV for hydrolysis. This Cellvibrio japonicus (strain Ueda107) (Pseudomonas fluorescens subsp. cellulosa) protein is ATP-dependent protease ATPase subunit HslU.